A 324-amino-acid chain; its full sequence is Anthranilate phosphoribosyltransferase (324 aa).

5-phospho-alpha-D-ribose 1-diphosphate-binding positions include G72, 75–76 (GD), S80, 82–85 (NVST), 99–107 (KHGNVSITS), and S111. Residue G72 participates in anthranilate binding. Residue S84 participates in Mg(2+) binding. Residue N102 coordinates anthranilate. An anthranilate-binding site is contributed by R157. Positions 215 and 216 each coordinate Mg(2+).

The protein belongs to the anthranilate phosphoribosyltransferase family. In terms of assembly, homodimer. Requires Mg(2+) as cofactor.

The enzyme catalyses N-(5-phospho-beta-D-ribosyl)anthranilate + diphosphate = 5-phospho-alpha-D-ribose 1-diphosphate + anthranilate. The protein operates within amino-acid biosynthesis; L-tryptophan biosynthesis; L-tryptophan from chorismate: step 2/5. Catalyzes the transfer of the phosphoribosyl group of 5-phosphorylribose-1-pyrophosphate (PRPP) to anthranilate to yield N-(5'-phosphoribosyl)-anthranilate (PRA). This Pyrococcus abyssi (strain GE5 / Orsay) protein is Anthranilate phosphoribosyltransferase.